The following is a 155-amino-acid chain: Small ribosomal subunit protein uS7cz/uS7cy (155 aa).

Belongs to the universal ribosomal protein uS7 family. In terms of assembly, part of the 30S ribosomal subunit.

The protein localises to the plastid. The protein resides in the chloroplast. One of the primary rRNA binding proteins, it binds directly to 16S rRNA where it nucleates assembly of the head domain of the 30S subunit. This chain is Small ribosomal subunit protein uS7cz/uS7cy (rps7-A), found in Drimys granadensis.